Reading from the N-terminus, the 348-residue chain is Protein disulfide isomerase CRELD2 (348 aa).

The N-terminal stretch at 1–22 (MHLPPAAAVGLLLLLLPPPARV) is a signal peptide. The short motif at 30 to 33 (CQRC) is the CXXC element. 4 cysteine pairs are disulfide-bonded: C30-C33, C139-C153, C147-C165, and C167-C176. The EGF-like 1 domain maps to 135 to 177 (DCQECQGGSQRPCSGNGHCDGDGSRQGDGSCQCHVGYKGPLCI). The stretch at 192 to 239 (HSFCTACDESCKTCSGPTNKGCVECEVGWTRVEDACVDVDECAAETPP) is one FU 1 repeat. N-linked (GlcNAc...) asparagine glycosylation occurs at N250. An FU 2 repeat occupies 252–299 (SYTCEECDSTCVGCTGKGPANCKECISGYSKQKGECADIDECSLETKV). The CXXC motif lies at 262–265 (CVGC). 4 disulfides stabilise this stretch: C262–C265, C293–C307, C300–C316, and C318–C328. Residues 289–329 (DIDECSLETKVCKKENENCYNTPGSFVCVCPEGFEEDRRCL) enclose the EGF-like 2; calcium-binding domain.

The protein belongs to the CRELD family. As to quaternary structure, interacts with CHRNA4. Component of a complex containing at least CRELD2, MANF, MATN3 and PDIA4.

Its subcellular location is the endoplasmic reticulum. The catalysed reaction is Catalyzes the rearrangement of -S-S- bonds in proteins.. In terms of biological role, protein disulfide isomerase. Might play a role in the unfolded protein response. May regulate transport of alpha4-beta2 neuronal acetylcholine receptor. This is Protein disulfide isomerase CRELD2 (CRELD2) from Cricetulus griseus (Chinese hamster).